We begin with the raw amino-acid sequence, 242 residues long: Probable transcriptional regulatory protein lp_2253 (242 aa).

The interval 1-21 is disordered; sequence MSGHSKWHNIQGRKNAQDAKR.

This sequence belongs to the TACO1 family.

The protein localises to the cytoplasm. The polypeptide is Probable transcriptional regulatory protein lp_2253 (Lactiplantibacillus plantarum (strain ATCC BAA-793 / NCIMB 8826 / WCFS1) (Lactobacillus plantarum)).